The chain runs to 193 residues: ATP-dependent Clp protease proteolytic subunit (193 aa).

Serine 98 functions as the Nucleophile in the catalytic mechanism. Histidine 123 is a catalytic residue.

Belongs to the peptidase S14 family. In terms of assembly, fourteen ClpP subunits assemble into 2 heptameric rings which stack back to back to give a disk-like structure with a central cavity, resembling the structure of eukaryotic proteasomes.

The protein resides in the cytoplasm. The enzyme catalyses Hydrolysis of proteins to small peptides in the presence of ATP and magnesium. alpha-casein is the usual test substrate. In the absence of ATP, only oligopeptides shorter than five residues are hydrolyzed (such as succinyl-Leu-Tyr-|-NHMec, and Leu-Tyr-Leu-|-Tyr-Trp, in which cleavage of the -Tyr-|-Leu- and -Tyr-|-Trp bonds also occurs).. Functionally, cleaves peptides in various proteins in a process that requires ATP hydrolysis. Has a chymotrypsin-like activity. Plays a major role in the degradation of misfolded proteins. In Lachnospira eligens (strain ATCC 27750 / DSM 3376 / VPI C15-48 / C15-B4) (Eubacterium eligens), this protein is ATP-dependent Clp protease proteolytic subunit.